Here is a 408-residue protein sequence, read N- to C-terminus: Formate-dependent phosphoribosylglycinamide formyltransferase (408 aa).

N(1)-(5-phospho-beta-D-ribosyl)glycinamide contacts are provided by residues 25–26 (EL) and glutamate 85. ATP is bound by residues arginine 118, lysine 159, 164 to 169 (SSGKGQ), 199 to 202 (EAFV), and glutamate 207. One can recognise an ATP-grasp domain in the interval 123-318 (KLAAEELGLP…EFELHAKAIL (196 aa)). Positions 277 and 289 each coordinate Mg(2+). Residues aspartate 296, lysine 365, and 372 to 373 (RR) each bind N(1)-(5-phospho-beta-D-ribosyl)glycinamide.

This sequence belongs to the PurK/PurT family. In terms of assembly, homodimer.

It catalyses the reaction N(1)-(5-phospho-beta-D-ribosyl)glycinamide + formate + ATP = N(2)-formyl-N(1)-(5-phospho-beta-D-ribosyl)glycinamide + ADP + phosphate + H(+). It functions in the pathway purine metabolism; IMP biosynthesis via de novo pathway; N(2)-formyl-N(1)-(5-phospho-D-ribosyl)glycinamide from N(1)-(5-phospho-D-ribosyl)glycinamide (formate route): step 1/1. Functionally, involved in the de novo purine biosynthesis. Catalyzes the transfer of formate to 5-phospho-ribosyl-glycinamide (GAR), producing 5-phospho-ribosyl-N-formylglycinamide (FGAR). Formate is provided by PurU via hydrolysis of 10-formyl-tetrahydrofolate. This chain is Formate-dependent phosphoribosylglycinamide formyltransferase, found in Corynebacterium glutamicum (strain R).